A 328-amino-acid polypeptide reads, in one-letter code: 4-hydroxy-3-methylbut-2-enyl diphosphate reductase (328 aa).

Cys24 contributes to the [4Fe-4S] cluster binding site. Positions 55 and 88 each coordinate (2E)-4-hydroxy-3-methylbut-2-enyl diphosphate. Dimethylallyl diphosphate contacts are provided by His55 and His88. 2 residues coordinate isopentenyl diphosphate: His55 and His88. Cys110 contacts [4Fe-4S] cluster. His138 contributes to the (2E)-4-hydroxy-3-methylbut-2-enyl diphosphate binding site. His138 contributes to the dimethylallyl diphosphate binding site. Residue His138 participates in isopentenyl diphosphate binding. Glu140 functions as the Proton donor in the catalytic mechanism. Thr178 contributes to the (2E)-4-hydroxy-3-methylbut-2-enyl diphosphate binding site. Residue Cys208 coordinates [4Fe-4S] cluster. Positions 236, 237, 238, and 279 each coordinate (2E)-4-hydroxy-3-methylbut-2-enyl diphosphate. Dimethylallyl diphosphate is bound by residues Ser236, Ser237, Asn238, and Ser279. 4 residues coordinate isopentenyl diphosphate: Ser236, Ser237, Asn238, and Ser279.

It belongs to the IspH family. [4Fe-4S] cluster is required as a cofactor.

It carries out the reaction isopentenyl diphosphate + 2 oxidized [2Fe-2S]-[ferredoxin] + H2O = (2E)-4-hydroxy-3-methylbut-2-enyl diphosphate + 2 reduced [2Fe-2S]-[ferredoxin] + 2 H(+). The catalysed reaction is dimethylallyl diphosphate + 2 oxidized [2Fe-2S]-[ferredoxin] + H2O = (2E)-4-hydroxy-3-methylbut-2-enyl diphosphate + 2 reduced [2Fe-2S]-[ferredoxin] + 2 H(+). Its pathway is isoprenoid biosynthesis; dimethylallyl diphosphate biosynthesis; dimethylallyl diphosphate from (2E)-4-hydroxy-3-methylbutenyl diphosphate: step 1/1. It participates in isoprenoid biosynthesis; isopentenyl diphosphate biosynthesis via DXP pathway; isopentenyl diphosphate from 1-deoxy-D-xylulose 5-phosphate: step 6/6. Catalyzes the conversion of 1-hydroxy-2-methyl-2-(E)-butenyl 4-diphosphate (HMBPP) into a mixture of isopentenyl diphosphate (IPP) and dimethylallyl diphosphate (DMAPP). Acts in the terminal step of the DOXP/MEP pathway for isoprenoid precursor biosynthesis. In Ehrlichia ruminantium (strain Gardel), this protein is 4-hydroxy-3-methylbut-2-enyl diphosphate reductase.